We begin with the raw amino-acid sequence, 298 residues long: Oxidoreductase YdhF (298 aa).

Catalysis depends on Y55, which acts as the Proton donor. Residues 158-159, 209-220, and 263-264 contribute to the NADP(+) site; these read SN, WSCLGGGRLFND, and SG.

Belongs to the aldo/keto reductase family. Aldo/keto reductase 2 subfamily.

May function as oxidoreductase. In Escherichia coli (strain K12), this protein is Oxidoreductase YdhF (ydhF).